The sequence spans 576 residues: MGAVGVEAGVFDTVDGLVGEVMRLHRSLPARPAVEEVEAAEALAAAADREERARADAVARLRRSPAVPDELLCVAQEMHRALAGFQCREQKRDAARLLELEALHTLFDDLIQRASQCLPSTSTRAAPRIAAPAAATTTTSTAAAGSSSSSAVGNAERHASSGTNGFTASRVAGTSTSTGRVSMDDSYVRKAKAAMWDGGAAATNSHLPRGPVEANSVAVRADGNYGDDNEKLSLIKLASMIEVSAKKGARDLNLQGKLMAQIEWLPDSIGKLTGLVTLDISENRLLALPDAIGKLFSLAKLDIHANRISQLPESIGDLRSLIYLNMRGNQLSSLPSSIGRLLNLEELDVGSNGLSSLPDSIGSLTRLKKLIVETNDLDELPYTIGHCVSLVELQAGYNHLKALPEAVGKLEPLEILSVRYNNLRSLPTTMASLTKLKEVDVSFNELESIPENFCFATSLIKLNVGNNFADLQYLPRSIGNLEMLEELDMSNNQIRVLPDSFGNLKHLRVLRAEENPLQVPPRDIALKGAQAVVQYMSDASKRTTKSEPMKPKKTWVHFCFFSRPNKRKHDRIDNAT.

Residues Ala-130 to Ala-151 are compositionally biased toward low complexity. The disordered stretch occupies residues Ala-130–Val-181. A compositionally biased stretch (polar residues) spans Ser-160–Arg-180. 11 LRR repeats span residues Leu-272–Leu-295, Phe-296–Leu-318, Ser-320–Leu-341, Leu-342–Leu-364, Arg-366–Cys-387, Ser-389–Leu-410, Glu-411–Leu-433, Thr-434–Ala-456, Ser-458–Leu-481, Glu-482–Asn-503, and Lys-505–Lys-527. Positions Gly-528–Tyr-535 match the GVYW; degenerate motif.

Belongs to the SHOC2 family. Widely expressed.

Leucine-rich repeat protein that likely mediates protein interactions, possibly in the context of signal transduction. The polypeptide is Plant intracellular Ras-group-related LRR protein 4 (IRL4) (Oryza sativa subsp. japonica (Rice)).